The chain runs to 888 residues: Transmembrane channel-like protein 2 (888 aa).

Residues Met-1–Asp-128 are disordered. Residues Met-1–Gly-228 are Cytoplasmic-facing. Basic and acidic residues-rich tracts occupy residues Ser-7 to Ala-16, Asp-32 to Ala-44, and Arg-87 to Lys-110. Polar residues predominate over residues Ser-117–Asp-128. The chain crosses the membrane as a helical span at residues Ser-229–Pro-266. Over Tyr-267–Tyr-317 the chain is Extracellular. Residues Arg-318–Thr-350 form a helical membrane-spanning segment. Topologically, residues Ser-351 to His-406 are cytoplasmic. Residues Leu-407–Ser-437 form a helical membrane-spanning segment. Topologically, residues Gln-438–Ser-447 are extracellular. The chain crosses the membrane as a helical span at residues Trp-448–Leu-475. Over Glu-476–His-479 the chain is Cytoplasmic. The chain crosses the membrane as a helical span at residues Pro-480 to Leu-514. Residues Ser-515–Cys-556 lie on the Extracellular side of the membrane. A helical membrane pass occupies residues Trp-557 to Met-594. Residues Asn-595–Asp-613 are Cytoplasmic-facing. The helical transmembrane segment at Ile-614–Tyr-634 threads the bilayer. Residues Ala-635–Gly-637 lie on the Extracellular side of the membrane. A helical transmembrane segment spans residues Leu-638–Ser-660. Topologically, residues Asn-661–Asn-674 are cytoplasmic. The chain crosses the membrane as a helical span at residues Asn-675–Ser-698. Residues Leu-699–Gly-741 lie on the Extracellular side of the membrane. The chain crosses the membrane as a helical span at residues Leu-742–Ile-775. The Cytoplasmic segment spans residues Gln-776–Asn-888. The interval Leu-813–Asn-888 is disordered. 2 stretches are compositionally biased toward polar residues: residues Pro-836 to Trp-851 and Gly-866 to Lys-881.

Belongs to the TMC family. In terms of assembly, forms the MET channel composed of TMC dimer (TMC1 or TMC2), TMIE, TOMT, CIB (CIB2 or CIB3), LHFPL5 and PDH15. The interaction of TMC1 and TMC2 with TOMT is required for the transportation of TMC1/2 into the stereocilia of hair cells. Interacts (via N-terminus) with both isoforms CD1 and CD3 of PCDH15. Can form a heterodimer with TMC1, TMC5 or TMC7. In terms of tissue distribution, inner ear and testis. Expressed in cochlear inner and outer hair cells and vestibular organ hair cells.

It is found in the cell membrane. It catalyses the reaction Ca(2+)(in) = Ca(2+)(out). Its function is as follows. Pore-forming subunit of the mechanotransducer (MET) non-selective cation channel complex located at the tips of stereocilia of cochlear hair cells and that mediates sensory transduction in the auditory system. The MET complex is composed of two dimeric pore-forming ion-conducting transmembrane TMC (TMC1 or TMC2) subunits, several auxiliary proteins including LHFPL5, TMIE, CIB2/3 and TOMT, the tip-link PCDH15, and possibly the PIEZO subunits. MET channel is activated by tension in the tip-link extending from the side wall of one stereocilium to the tip of the adjacent shorter stereocilium, where the channel is located. TMC2 MET channel is highly permeable to calcium and likely transports monovalent cations. Also involved in vestibular hair cell transduction current of the mammalian inner ear. The sequence is that of Transmembrane channel-like protein 2 from Mus musculus (Mouse).